The sequence spans 455 residues: Chromosomal replication initiator protein DnaA (455 aa).

A domain I, interacts with DnaA modulators region spans residues 1 to 75; sequence MDTNNNIEKE…EILSQNKVGM (75 aa). The domain II stretch occupies residues 75-106; that stretch reads MHLAHSVDVRIEVAPKIQINAQANINYKAIKT. A domain III, AAA+ region region spans residues 107–321; sequence SVKDSYTFEN…GAIIKISVNA (215 aa). ATP contacts are provided by G151, G153, K154, and T155. The segment at 322 to 455 is domain IV, binds dsDNA; that stretch reads NLMNAPIDLN…DKKTAFNSSE (134 aa).

Belongs to the DnaA family. Oligomerizes as a right-handed, spiral filament on DNA at oriC.

Its subcellular location is the cytoplasm. Its function is as follows. Plays an essential role in the initiation and regulation of chromosomal replication. ATP-DnaA binds to the origin of replication (oriC) to initiate formation of the DNA replication initiation complex once per cell cycle. Binds the DnaA box (a 9 base pair repeat at the origin) and separates the double-stranded (ds)DNA. Forms a right-handed helical filament on oriC DNA; dsDNA binds to the exterior of the filament while single-stranded (ss)DNA is stabiized in the filament's interior. The ATP-DnaA-oriC complex binds and stabilizes one strand of the AT-rich DNA unwinding element (DUE), permitting loading of DNA polymerase. After initiation quickly degrades to an ADP-DnaA complex that is not apt for DNA replication. Binds acidic phospholipids. This is Chromosomal replication initiator protein DnaA from Helicobacter pylori (strain P12).